Consider the following 421-residue polypeptide: Serine hydroxymethyltransferase (421 aa).

(6S)-5,6,7,8-tetrahydrofolate-binding positions include Leu-120 and 124 to 126 (GHL). The residue at position 229 (Lys-229) is an N6-(pyridoxal phosphate)lysine. 354-356 (SPF) provides a ligand contact to (6S)-5,6,7,8-tetrahydrofolate.

This sequence belongs to the SHMT family. Homodimer. The cofactor is pyridoxal 5'-phosphate.

Its subcellular location is the cytoplasm. It carries out the reaction (6R)-5,10-methylene-5,6,7,8-tetrahydrofolate + glycine + H2O = (6S)-5,6,7,8-tetrahydrofolate + L-serine. It participates in one-carbon metabolism; tetrahydrofolate interconversion. Its pathway is amino-acid biosynthesis; glycine biosynthesis; glycine from L-serine: step 1/1. Catalyzes the reversible interconversion of serine and glycine with tetrahydrofolate (THF) serving as the one-carbon carrier. This reaction serves as the major source of one-carbon groups required for the biosynthesis of purines, thymidylate, methionine, and other important biomolecules. Also exhibits THF-independent aldolase activity toward beta-hydroxyamino acids, producing glycine and aldehydes, via a retro-aldol mechanism. This is Serine hydroxymethyltransferase from Opitutus terrae (strain DSM 11246 / JCM 15787 / PB90-1).